A 571-amino-acid polypeptide reads, in one-letter code: Penicillin-binding protein activator LpoA (571 aa).

Positions 1–26 (MMTILLQHTHLKNRLMPFLLALFLAG) are cleaved as a signal peptide. The N-palmitoyl cysteine moiety is linked to residue Cys27. The S-diacylglycerol cysteine moiety is linked to residue Cys27.

This sequence belongs to the LpoA family. In terms of assembly, interacts with PBP1a.

It is found in the cell outer membrane. Regulator of peptidoglycan synthesis that is essential for the function of penicillin-binding protein 1A (PBP1a). The polypeptide is Penicillin-binding protein activator LpoA (Pasteurella multocida (strain Pm70)).